The sequence spans 88 residues: ATP synthase subunit 9, mitochondrial (88 aa).

Transmembrane regions (helical) follow at residues 8–28 (IGAG…GNVF) and 45–72 (LFGY…LILF).

It belongs to the ATPase C chain family. As to quaternary structure, F-type ATPases have 2 components, CF(1) - the catalytic core - and CF(0) - the membrane proton channel. CF(1) has five subunits: alpha(3), beta(3), gamma(1), delta(1), epsilon(1). CF(0) has three main subunits: a, b and c.

It is found in the mitochondrion membrane. The catalysed reaction is ATP + H2O + 4 H(+)(in) = ADP + phosphate + 5 H(+)(out). In terms of biological role, this protein is one of the chains of the nonenzymatic membrane component (F0) of mitochondrial ATPase. This chain is ATP synthase subunit 9, mitochondrial (ATP9), found in Beta vulgaris (Sugar beet).